Consider the following 128-residue polypeptide: 3-aminoacrylate deaminase RutC (128 aa).

The protein belongs to the RutC family. Homotrimer.

It catalyses the reaction (Z)-3-aminoacrylate + H2O + H(+) = 3-oxopropanoate + NH4(+). In terms of biological role, involved in pyrimidine catabolism. Catalyzes the deamination of 3-aminoacrylate to malonic semialdehyde, a reaction that can also occur spontaneously. RutC may facilitate the reaction and modulate the metabolic fitness, rather than catalyzing essential functions. The polypeptide is 3-aminoacrylate deaminase RutC (Escherichia coli (strain SE11)).